The primary structure comprises 967 residues: MPSPPGLRALWLCAALCASRRAGGAPQPGPGPTACPAPCHCQEDGIMLSADCSELGLSAVPGDLDPLTAYLDLSMNNLTELQPGLFHHLRFLEELRLSGNHLSHIPGQAFSGLYSLKILMLQNNQLGGIPAEALWELPSLQSLRLDANLISLVPERSFEGLSSLRHLWLDDNALTEIPVRALNNLPALQAMTLALNRISHIPDYAFQNLTSLVVLHLHNNRIQHLGTHSFEGLHNLETLDLNYNKLQEFPVAIRTLGRLQELGFHNNNIKAIPEKAFMGNPLLQTIHFYDNPIQFVGRSAFQYLPKLHTLSLNGAMDIQEFPDLKGTTSLEILTLTRAGIRLLPSGMCQQLPRLRVLELSHNQIEELPSLHRCQKLEEIGLQHNRIWEIGADTFSQLSSLQALDLSWNAIRSIHPEAFSTLHSLVKLDLTDNQLTTLPLAGLGGLMHLKLKGNLALSQAFSKDSFPKLRILEVPYAYQCCPYGMCASFFKASGQWEAEDLHLDDEESSKRPLGLLARQAENHYDQDLDELQLEMEDSKPHPSVQCSPTPGPFKPCEYLFESWGIRLAVWAIVLLSVLCNGLVLLTVFAGGPVPLPPVKFVVGAIAGANTLTGISCGLLASVDALTFGQFSEYGARWETGLGCRATGFLAVLGSEASVLLLTLAAVQCSVSVSCVRAYGKSPSLGSVRAGVLGCLALAGLAAALPLASVGEYGASPLCLPYAPPEGQPAALGFTVALVMMNSFCFLVVAGAYIKLYCDLPRGDFEAVWDCAMVRHVAWLIFADGLLYCPVAFLSFASMLGLFPVTPEAVKSVLLVVLPLPACLNPLLYLLFNPHFRDDLRRLRPRAGDSGPLAYAAAGELEKSSCDSTQALVAFSDVDLILEASEAGRPPGLETYGFPSVTLISCQQPGAPRLEGSHCVEPEGNHFGNPQPSMDGELLLRAEGSTPAGGGLSGGGGFQPSGLAFASHV.

The first 24 residues, 1 to 24 (MPSPPGLRALWLCAALCASRRAGG), serve as a signal peptide directing secretion. Residues 25–567 (APQPGPGPTA…LFESWGIRLA (543 aa)) lie on the Extracellular side of the membrane. The 41-residue stretch at 26–66 (PQPGPGPTACPAPCHCQEDGIMLSADCSELGLSAVPGDLDP) folds into the LRRNT domain. N-linked (GlcNAc...) asparagine glycosylation is present at Asn-77. 15 LRR repeats span residues 91–112 (FLEE…AFSG), 115–136 (SLKI…ALWE), 139–160 (SLQS…SFEG), 163–186 (SLRH…NNLP), 187–208 (ALQA…AFQN), 211–232 (SLVV…SFEG), 235–256 (NLET…IRTL), 258–279 (RLQE…AFMG), 282–303 (LLQT…AFQY), 306–328 (KLHT…KGTT), 329–350 (SLEI…MCQQ), 353–374 (RLRV…HRCQ), 375–396 (KLEE…TFSQ), 399–420 (SLQA…AFST), and 423–443 (SLVK…AGLG). A glycan (N-linked (GlcNAc...) asparagine) is linked at Asn-208. Residues 568–588 (VWAIVLLSVLCNGLVLLTVFA) form a helical membrane-spanning segment. Over 589–598 (GGPVPLPPVK) the chain is Cytoplasmic. The chain crosses the membrane as a helical span at residues 599-619 (FVVGAIAGANTLTGISCGLLA). Over 620-644 (SVDALTFGQFSEYGARWETGLGCRA) the chain is Extracellular. Cys-642 and Cys-717 are joined by a disulfide. A helical transmembrane segment spans residues 645–665 (TGFLAVLGSEASVLLLTLAAV). The Cytoplasmic portion of the chain corresponds to 666–687 (QCSVSVSCVRAYGKSPSLGSVR). Residues 688–708 (AGVLGCLALAGLAAALPLASV) traverse the membrane as a helical segment. Topologically, residues 709–727 (GEYGASPLCLPYAPPEGQP) are extracellular. The chain crosses the membrane as a helical span at residues 728–748 (AALGFTVALVMMNSFCFLVVA). The Cytoplasmic segment spans residues 749–774 (GAYIKLYCDLPRGDFEAVWDCAMVRH). A helical membrane pass occupies residues 775 to 795 (VAWLIFADGLLYCPVAFLSFA). Residues 796–809 (SMLGLFPVTPEAVK) are Extracellular-facing. A helical transmembrane segment spans residues 810–830 (SVLLVVLPLPACLNPLLYLLF). Residues 831-967 (NPHFRDDLRR…PSGLAFASHV (137 aa)) are Cytoplasmic-facing.

This sequence belongs to the G-protein coupled receptor 1 family.

Its subcellular location is the cell membrane. Functionally, receptor for R-spondins that potentiates the canonical Wnt signaling pathway and acts as a marker of multipotent stem cells in the epidermis. Upon binding to R-spondins (RSPO1, RSPO2, RSPO3 or RSPO4), associates with phosphorylated LRP6 and frizzled receptors that are activated by extracellular Wnt receptors, triggering the canonical Wnt signaling pathway to increase expression of target genes. In contrast to classical G-protein coupled receptors, does not activate heterotrimeric G-proteins to transduce the signal. May act as a tumor suppressor. In Homo sapiens (Human), this protein is Leucine-rich repeat-containing G-protein coupled receptor 6 (LGR6).